The primary structure comprises 356 residues: Butyrate kinase (356 aa).

It belongs to the acetokinase family.

The protein localises to the cytoplasm. It carries out the reaction butanoate + ATP = butanoyl phosphate + ADP. The protein operates within lipid metabolism; butanoate metabolism. Functionally, catalyzes the conversion of butyryl-CoA through butyryl phosphate to butyrate. The protein is Butyrate kinase (buk) of Clostridium perfringens (strain ATCC 13124 / DSM 756 / JCM 1290 / NCIMB 6125 / NCTC 8237 / Type A).